A 63-amino-acid polypeptide reads, in one-letter code: Toxin Tx7335 (63 aa).

Cystine bridges form between Cys3–Cys24, Cys17–Cys39, Cys25–Cys55, and Cys56–Cys61.

In terms of processing, contains 4 disulfide bonds. As to expression, expressed by the venom gland.

It is found in the secreted. Activates bacterial pH-gated potassium channel KcsA by binding to its extracellular domain, probably at a site different from channel inhibitors. Increases both mean open time and open probability of KscA. This Dendroaspis angusticeps (Eastern green mamba) protein is Toxin Tx7335.